Consider the following 107-residue polypeptide: UPF0145 protein PC1_1703 (107 aa).

The protein belongs to the UPF0145 family.

The protein is UPF0145 protein PC1_1703 of Pectobacterium carotovorum subsp. carotovorum (strain PC1).